Here is a 196-residue protein sequence, read N- to C-terminus: Chromophore lyase CpcS/CpeS 2 (196 aa).

This sequence belongs to the CpcS/CpeS biliprotein lyase family.

Its function is as follows. Covalently attaches a chromophore to Cys residue(s) of phycobiliproteins. The protein is Chromophore lyase CpcS/CpeS 2 of Trichodesmium erythraeum (strain IMS101).